Here is a 178-residue protein sequence, read N- to C-terminus: Translation initiation factor IF-3 (178 aa).

The segment at 1-20 (MRRPFKAAAPTKDGPRSNRD) is disordered.

The protein belongs to the IF-3 family. Monomer.

The protein localises to the cytoplasm. Functionally, IF-3 binds to the 30S ribosomal subunit and shifts the equilibrium between 70S ribosomes and their 50S and 30S subunits in favor of the free subunits, thus enhancing the availability of 30S subunits on which protein synthesis initiation begins. The sequence is that of Translation initiation factor IF-3 from Mesorhizobium japonicum (strain LMG 29417 / CECT 9101 / MAFF 303099) (Mesorhizobium loti (strain MAFF 303099)).